The sequence spans 602 residues: ATP-dependent lipid A-core flippase (602 aa).

The next 5 helical transmembrane spans lie at 28–48 (VGIF…QPML), 84–104 (LLII…NYFL), 158–178 (IKVV…LLWM), 180–200 (WHLT…VSIA), and 268–288 (PMLQ…VLFL). Residues 32–323 (LLSIVGFVIF…LSEVSSTIQK (292 aa)) enclose the ABC transmembrane type-1 domain. The ABC transporter domain maps to 355–591 (LEVRNLSFTY…NGHYARLHAM (237 aa)). Position 389–396 (389–396 (GRSGSGKS)) interacts with ATP.

It belongs to the ABC transporter superfamily. Lipid exporter (TC 3.A.1.106) family. In terms of assembly, homodimer.

The protein localises to the cell inner membrane. The enzyme catalyses ATP + H2O + lipid A-core oligosaccharideSide 1 = ADP + phosphate + lipid A-core oligosaccharideSide 2.. Functionally, involved in lipopolysaccharide (LPS) biosynthesis. Translocates lipid A-core from the inner to the outer leaflet of the inner membrane. Transmembrane domains (TMD) form a pore in the inner membrane and the ATP-binding domain (NBD) is responsible for energy generation. The sequence is that of ATP-dependent lipid A-core flippase from Pseudomonas putida (strain ATCC 47054 / DSM 6125 / CFBP 8728 / NCIMB 11950 / KT2440).